Consider the following 527-residue polypeptide: Light-independent protochlorophyllide reductase subunit B (527 aa).

Position 36 (D36) interacts with [4Fe-4S] cluster. Catalysis depends on D292, which acts as the Proton donor. G428–L429 provides a ligand contact to substrate.

This sequence belongs to the ChlB/BchB/BchZ family. In terms of assembly, protochlorophyllide reductase is composed of three subunits; BchL, BchN and BchB. Forms a heterotetramer of two BchB and two BchN subunits. It depends on [4Fe-4S] cluster as a cofactor.

It catalyses the reaction chlorophyllide a + oxidized 2[4Fe-4S]-[ferredoxin] + 2 ADP + 2 phosphate = protochlorophyllide a + reduced 2[4Fe-4S]-[ferredoxin] + 2 ATP + 2 H2O. It functions in the pathway porphyrin-containing compound metabolism; bacteriochlorophyll biosynthesis (light-independent). Functionally, component of the dark-operative protochlorophyllide reductase (DPOR) that uses Mg-ATP and reduced ferredoxin to reduce ring D of protochlorophyllide (Pchlide) to form chlorophyllide a (Chlide). This reaction is light-independent. The NB-protein (BchN-BchB) is the catalytic component of the complex. This chain is Light-independent protochlorophyllide reductase subunit B, found in Chlorobium phaeovibrioides (strain DSM 265 / 1930) (Prosthecochloris vibrioformis (strain DSM 265)).